Here is a 951-residue protein sequence, read N- to C-terminus: Zinc fingers and homeoboxes protein 3 (951 aa).

The segment at 1-66 (MASKRKSTTP…SSTDGSALAN (66 aa)) is disordered. Positions 1-107 (MASKRKSTTP…SEHTDFNKDP (107 aa)) are required for nuclear localization. Residues 42–58 (PSEAPDASSEAAPNPSS) show a composition bias toward low complexity. C2H2-type zinc fingers lie at residues 77 to 100 (YCCK…NSEH) and 109 to 132 (FVCT…AKCH). The interval 227-252 (TFINGAAPGSQASAKSTKPPPAANGP) is disordered. Positions 238–483 (ASAKSTKPPP…LLTACPSITS (246 aa)) are required for homodimerization and interaction with NFYA. The tract at residues 299-497 (LSSIPTYNAA…DANIYKNKKS (199 aa)) is required for repressor activity. 2 consecutive DNA-binding regions (homeobox) follow at residues 300-359 (SSIP…GISW) and 489-548 (ANIY…RNLK). Residues 492 to 550 (YKNKKSHEQLSALKGSFCRNQFPGQSEVEHLTKVTGLSTREVRKWFSDRRYHCRNLKGS) are required for nuclear localization. Phosphoserine is present on Ser599. The homeobox 3 DNA-binding region spans 607 to 666 (TPTKYKERAPEQLRVLENSFAQNPLPPEEELDRLRSETKMTRREIDGWFSERRKKVNTEE). Residues 662-676 (VNTEETKKADGHMPK) show a composition bias toward basic and acidic residues. A disordered region spans residues 662–690 (VNTEETKKADGHMPKEEEEGAEQEGRDEE). Positions 677–690 (EEEEGAEQEGRDEE) are enriched in acidic residues. Phosphoserine is present on residues Ser703 and Ser718. DNA-binding regions (homeobox) lie at residues 759-818 (PSKV…KNGQ) and 830-889 (FPPG…TRAV). Residues 916-951 (SELSENSESWEPSAPEASSEPFDTSSPQSGRQLEAD) are disordered. Low complexity predominate over residues 919-936 (SENSESWEPSAPEASSEP). Phosphoserine is present on residues Ser922 and Ser941. Polar residues predominate over residues 937-951 (FDTSSPQSGRQLEAD).

It belongs to the ZHX family. Homodimer (via homeobox domain 1). Heterodimer with ZHX1 (via homeobox domain 1). Heterodimer with ZHX2 (via homeobox domain 1). Heterodimerization with ZHX1 is a prerequisite for repressor activity. Interacts with NFYA. Ubiquitously expressed.

The protein resides in the nucleus. In terms of biological role, acts as a transcriptional repressor. Involved in the early stages of mesenchymal stem cell (MSC) osteogenic differentiation. Is a regulator of podocyte gene expression during primary glomerula disease. Binds to promoter DNA. The protein is Zinc fingers and homeoboxes protein 3 (Zhx3) of Mus musculus (Mouse).